The primary structure comprises 398 residues: Succinate--CoA ligase [ADP-forming] subunit beta (398 aa).

The ATP-grasp domain maps to 9-254 (KAVLREFGVP…ETEEDAKEIE (246 aa)). ATP contacts are provided by residues K46, 53–55 (GRG), E109, S112, and E117. Mg(2+) is bound by residues N209 and D223. Substrate contacts are provided by residues N274 and 331–333 (GIM).

This sequence belongs to the succinate/malate CoA ligase beta subunit family. Heterotetramer of two alpha and two beta subunits. Requires Mg(2+) as cofactor.

The enzyme catalyses succinate + ATP + CoA = succinyl-CoA + ADP + phosphate. It catalyses the reaction GTP + succinate + CoA = succinyl-CoA + GDP + phosphate. It functions in the pathway carbohydrate metabolism; tricarboxylic acid cycle; succinate from succinyl-CoA (ligase route): step 1/1. Succinyl-CoA synthetase functions in the citric acid cycle (TCA), coupling the hydrolysis of succinyl-CoA to the synthesis of either ATP or GTP and thus represents the only step of substrate-level phosphorylation in the TCA. The beta subunit provides nucleotide specificity of the enzyme and binds the substrate succinate, while the binding sites for coenzyme A and phosphate are found in the alpha subunit. The protein is Succinate--CoA ligase [ADP-forming] subunit beta of Rhodopseudomonas palustris (strain ATCC BAA-98 / CGA009).